The chain runs to 316 residues: Sulfate adenylyltransferase subunit 2 (316 aa).

A disordered region spans residues 297-316 (RAIDRDQSGSMEKKKREGYF).

Belongs to the PAPS reductase family. CysD subfamily. Heterodimer composed of CysD, the smaller subunit, and CysN.

It catalyses the reaction sulfate + ATP + H(+) = adenosine 5'-phosphosulfate + diphosphate. It participates in sulfur metabolism; hydrogen sulfide biosynthesis; sulfite from sulfate: step 1/3. Functionally, with CysN forms the ATP sulfurylase (ATPS) that catalyzes the adenylation of sulfate producing adenosine 5'-phosphosulfate (APS) and diphosphate, the first enzymatic step in sulfur assimilation pathway. APS synthesis involves the formation of a high-energy phosphoric-sulfuric acid anhydride bond driven by GTP hydrolysis by CysN coupled to ATP hydrolysis by CysD. This chain is Sulfate adenylyltransferase subunit 2, found in Allorhizobium ampelinum (strain ATCC BAA-846 / DSM 112012 / S4) (Agrobacterium vitis (strain S4)).